Here is a 538-residue protein sequence, read N- to C-terminus: Telomerase Cajal body protein 1 (538 aa).

The segment at 1–53 (MKTSEERLVVPDSLSSDQAPAPVPQGSPVDENTDSEPVPQPCGGDDRSQVAAD) is disordered. Ser-27 and Ser-87 each carry phosphoserine. Positions 92–128 (EQELSENVSLPVEDTNQPELASGEDVEGVSEEPGPVD) are disordered. A compositionally biased stretch (acidic residues) spans 113 to 128 (SGEDVEGVSEEPGPVD). WD repeat units lie at residues 154–194 (AHSE…YSAT), 210–255 (EGDT…LRAS), 260–301 (NHLD…RDCE), 311–352 (GQSG…ALLG), 353–393 (GHQG…HLLW), and 399–438 (VTTNQRIYFDLDPSGQFLVSGNTNGMVSVWDISGAFGDSS). Disordered regions lie at residues 471–491 (QRMFPEPTNSGDEGEPEGDLP) and 509–538 (CGGGPDPSSPNDPQDEKGQGRAEGCGDGLI). Thr-478 carries the post-translational modification Phosphothreonine. Residue Ser-480 is modified to Phosphoserine. The segment covering 529-538 (RAEGCGDGLI) has biased composition (gly residues).

This sequence belongs to the TCAB1 family. Component of the telomerase holoenzyme complex composed of one molecule of TERT, one molecule of WRAP53/TCAB1, two molecules of H/ACA ribonucleoprotein complex subunits DKC1, NOP10, NHP2 and GAR1, and a telomerase RNA template component (TERC). The telomerase holoenzyme complex is associated with TEP1, SMG6/EST1A and POT1. Interacts with the chaperonin-containing T-complex (TRiC) complex; which mediates the folding of WRAP53/TCAB1. Interacts with COIL. Interacts with SMN1. Interacts with RNF8. Interacts with histone H2AX. Preferentially expressed in testis.

It localises to the nucleus. The protein localises to the cajal body. It is found in the chromosome. Its subcellular location is the telomere. RNA chaperone that plays a key role in telomere maintenance and RNA localization to Cajal bodies. Specifically recognizes and binds the Cajal body box (CAB box) present in both small Cajal body RNAs (scaRNAs) and telomerase RNA template component (TERC). Essential component of the telomerase holoenzyme complex, a ribonucleoprotein complex essential for the replication of chromosome termini that elongates telomeres in most eukaryotes. In the telomerase holoenzyme complex, required to stimulate the catalytic activity of the complex. Acts by specifically binding the CAB box of the TERC RNA and controlling the folding of the CR4/CR5 region of the TERC RNA, a critical step for telomerase activity. In addition, also controls telomerase holoenzyme complex localization to Cajal body. During S phase, required for delivery of TERC to telomeres during S phase and for telomerase activity. In addition to its role in telomere maintenance, also required for Cajal body formation, probably by mediating localization of scaRNAs to Cajal bodies. Also plays a role in DNA repair: relocalizes to sites of DNA double-strand breaks in response to DNA damage and promotes the repair of DNA double-strand breaks. Acts by recruiting the ubiquitin ligase RNF8 to DNA breaks and promote both homologous recombination (HR) and non-homologous end joining (NHEJ). This chain is Telomerase Cajal body protein 1, found in Mesocricetus auratus (Golden hamster).